A 513-amino-acid polypeptide reads, in one-letter code: Putative thymidine phosphorylase (513 aa).

This sequence belongs to the thymidine/pyrimidine-nucleoside phosphorylase family. Type 2 subfamily.

The catalysed reaction is thymidine + phosphate = 2-deoxy-alpha-D-ribose 1-phosphate + thymine. The protein is Putative thymidine phosphorylase of Rhodopseudomonas palustris (strain BisA53).